Reading from the N-terminus, the 379-residue chain is UDP-4-amino-4-deoxy-L-arabinose--oxoglutarate aminotransferase (379 aa).

Residue Lys-182 is modified to N6-(pyridoxal phosphate)lysine.

Belongs to the DegT/DnrJ/EryC1 family. ArnB subfamily. In terms of assembly, homodimer. It depends on pyridoxal 5'-phosphate as a cofactor.

It catalyses the reaction UDP-4-amino-4-deoxy-beta-L-arabinose + 2-oxoglutarate = UDP-beta-L-threo-pentopyranos-4-ulose + L-glutamate. It participates in nucleotide-sugar biosynthesis; UDP-4-deoxy-4-formamido-beta-L-arabinose biosynthesis; UDP-4-deoxy-4-formamido-beta-L-arabinose from UDP-alpha-D-glucuronate: step 2/3. The protein operates within bacterial outer membrane biogenesis; lipopolysaccharide biosynthesis. Catalyzes the conversion of UDP-4-keto-arabinose (UDP-Ara4O) to UDP-4-amino-4-deoxy-L-arabinose (UDP-L-Ara4N). The modified arabinose is attached to lipid A and is required for resistance to polymyxin and cationic antimicrobial peptides. This is UDP-4-amino-4-deoxy-L-arabinose--oxoglutarate aminotransferase from Klebsiella pneumoniae subsp. pneumoniae (strain ATCC 700721 / MGH 78578).